The sequence spans 333 residues: Probable xyloglucan endotransglucosylase/hydrolase protein 27 (333 aa).

Residues 1–20 (METLSRLLVFMSLFSGLVSG) form the signal peptide. The 203-residue stretch at 21–223 (FALQNLPITS…YKYAPYIARF (203 aa)) folds into the GH16 domain. The active-site Nucleophile is the Glu108. The Proton donor role is filled by Glu112. Xyloglucan-binding positions include Glu112 and 125-127 (QTN). N-linked (GlcNAc...) asparagine glycosylation is present at Asn131. Residues 135-139 (HSGRE), 202-203 (KW), Gly207, and Arg282 each bind xyloglucan. A disulfide bridge links Cys277 with Cys290. The tract at residues 311 to 333 (IPRRHRNGKHRSKRSRVDGTESI) is disordered. A compositionally biased stretch (basic residues) spans 312 to 324 (PRRHRNGKHRSKR).

Belongs to the glycosyl hydrolase 16 family. XTH group 3 subfamily. In terms of processing, contains at least one intrachain disulfide bond essential for its enzymatic activity. Expressed in 7 day old seedlings, roots, hypocotyls, rosette leaves, internodes between nodes bearing axillary shoots, nodes bearing flowers, flower buds, anthers and siliques.

Its subcellular location is the secreted. The protein resides in the cell wall. The protein localises to the extracellular space. It is found in the apoplast. It catalyses the reaction breaks a beta-(1-&gt;4) bond in the backbone of a xyloglucan and transfers the xyloglucanyl segment on to O-4 of the non-reducing terminal glucose residue of an acceptor, which can be a xyloglucan or an oligosaccharide of xyloglucan.. Functionally, catalyzes xyloglucan endohydrolysis (XEH) and/or endotransglycosylation (XET). Cleaves and religates xyloglucan polymers, an essential constituent of the primary cell wall, and thereby participates in cell wall construction of growing tissues. Required for cell wall modification during the development of tracheary elements. The chain is Probable xyloglucan endotransglucosylase/hydrolase protein 27 (XTH27) from Arabidopsis thaliana (Mouse-ear cress).